The primary structure comprises 109 residues: Arminin 6560 (109 aa).

The first 21 residues, 1-21, serve as a signal peptide directing secretion; it reads MKCLFGFLFIMLVAFLQDVHG. The propeptide occupies 22–77; that stretch reads VDSCIGKPCKVKGEDMKDIKEKKIEDIKEEIKNVKKEIFEDVDDELLDDNIRDDKI. Ile106 carries the isoleucine amide modification.

The protein belongs to the arminin family. Expressed in the ectodermal epithelium.

It localises to the secreted. The protein resides in the target cell membrane. Antimicrobial peptide with a broad-spectrum antimicrobial activity. Keeps its antibacterial activity under a wide range of salt concentrations that mimic physiological conditions of human blood, which is surprising, since Hydra is an obligate freshwater animal with nearly no salt tolerance. Does not affect red blood cells. This chain is Arminin 6560, found in Hydra vulgaris (Hydra).